A 953-amino-acid chain; its full sequence is Communesin biosynthesis cluster-specific transcription factor cnsN (953 aa).

A disordered region spans residues 371-418 (ELESTSPRTSHSSLSQDDTASLHSRSSLSSSPGRFPPSQKLVATSDSP). The segment covering 374–408 (STSPRTSHSSLSQDDTASLHSRSSLSSSPGRFPPS) has biased composition (low complexity).

It localises to the nucleus. Functionally, transcriptional regulator; part of the gene cluster that mediates the biosynthesis of communesins, a prominent class of indole alkaloids with great potential as pharmaceuticals. This Penicillium expansum (Blue mold rot fungus) protein is Communesin biosynthesis cluster-specific transcription factor cnsN.